A 331-amino-acid chain; its full sequence is Protein RecA (331 aa).

An ATP-binding site is contributed by 66–73; that stretch reads GPESSGKT.

Belongs to the RecA family.

The protein resides in the cytoplasm. Can catalyze the hydrolysis of ATP in the presence of single-stranded DNA, the ATP-dependent uptake of single-stranded DNA by duplex DNA, and the ATP-dependent hybridization of homologous single-stranded DNAs. It interacts with LexA causing its activation and leading to its autocatalytic cleavage. In Lactobacillus delbrueckii subsp. bulgaricus (strain ATCC 11842 / DSM 20081 / BCRC 10696 / JCM 1002 / NBRC 13953 / NCIMB 11778 / NCTC 12712 / WDCM 00102 / Lb 14), this protein is Protein RecA.